Consider the following 156-residue polypeptide: Small ribosomal subunit protein uS7 (156 aa).

The protein belongs to the universal ribosomal protein uS7 family. In terms of assembly, part of the 30S ribosomal subunit. Contacts proteins S9 and S11.

Its function is as follows. One of the primary rRNA binding proteins, it binds directly to 16S rRNA where it nucleates assembly of the head domain of the 30S subunit. Is located at the subunit interface close to the decoding center, probably blocks exit of the E-site tRNA. The sequence is that of Small ribosomal subunit protein uS7 from Shewanella woodyi (strain ATCC 51908 / MS32).